A 165-amino-acid polypeptide reads, in one-letter code: Methylated-DNA--protein-cysteine methyltransferase (165 aa).

Cys126 functions as the Nucleophile; methyl group acceptor in the catalytic mechanism.

It belongs to the MGMT family.

The protein localises to the cytoplasm. It catalyses the reaction a 6-O-methyl-2'-deoxyguanosine in DNA + L-cysteinyl-[protein] = S-methyl-L-cysteinyl-[protein] + a 2'-deoxyguanosine in DNA. The catalysed reaction is a 4-O-methyl-thymidine in DNA + L-cysteinyl-[protein] = a thymidine in DNA + S-methyl-L-cysteinyl-[protein]. Involved in the cellular defense against the biological effects of O6-methylguanine (O6-MeG) and O4-methylthymine (O4-MeT) in DNA. Repairs the methylated nucleobase in DNA by stoichiometrically transferring the methyl group to a cysteine residue in the enzyme. This is a suicide reaction: the enzyme is irreversibly inactivated. In Mycolicibacterium paratuberculosis (strain ATCC BAA-968 / K-10) (Mycobacterium paratuberculosis), this protein is Methylated-DNA--protein-cysteine methyltransferase.